Reading from the N-terminus, the 275-residue chain is Putative phosphoenolpyruvate synthase regulatory protein (275 aa).

153 to 160 (GVSRSGKT) is an ADP binding site.

Belongs to the pyruvate, phosphate/water dikinase regulatory protein family. PSRP subfamily.

It carries out the reaction [pyruvate, water dikinase] + ADP = [pyruvate, water dikinase]-phosphate + AMP + H(+). The enzyme catalyses [pyruvate, water dikinase]-phosphate + phosphate + H(+) = [pyruvate, water dikinase] + diphosphate. Bifunctional serine/threonine kinase and phosphorylase involved in the regulation of the phosphoenolpyruvate synthase (PEPS) by catalyzing its phosphorylation/dephosphorylation. This Nitrosomonas eutropha (strain DSM 101675 / C91 / Nm57) protein is Putative phosphoenolpyruvate synthase regulatory protein.